We begin with the raw amino-acid sequence, 638 residues long: 1-deoxy-D-xylulose-5-phosphate synthase (638 aa).

Thiamine diphosphate contacts are provided by residues H77 and 118–120 (AHA). A Mg(2+)-binding site is contributed by D149. Residues 150-151 (GS), N178, Y287, and E369 each bind thiamine diphosphate. Residue N178 coordinates Mg(2+).

This sequence belongs to the transketolase family. DXPS subfamily. In terms of assembly, homodimer. Mg(2+) serves as cofactor. The cofactor is thiamine diphosphate.

The catalysed reaction is D-glyceraldehyde 3-phosphate + pyruvate + H(+) = 1-deoxy-D-xylulose 5-phosphate + CO2. It participates in metabolic intermediate biosynthesis; 1-deoxy-D-xylulose 5-phosphate biosynthesis; 1-deoxy-D-xylulose 5-phosphate from D-glyceraldehyde 3-phosphate and pyruvate: step 1/1. In terms of biological role, catalyzes the acyloin condensation reaction between C atoms 2 and 3 of pyruvate and glyceraldehyde 3-phosphate to yield 1-deoxy-D-xylulose-5-phosphate (DXP). In Phenylobacterium zucineum (strain HLK1), this protein is 1-deoxy-D-xylulose-5-phosphate synthase.